The following is a 162-amino-acid chain: MHYVTPDLCDAYPELVQVVEPMFSNFGGRDSFGGEIVTIKCFEDNSLVKEQVDKDGKGKVLVVDGGGSLRRALLGDMLAEKAAKNGWEGIVVYGCIRDVDVIAQTDLGVQALASHPLKTDKRGIGDLNVAVTFGGVTFRPGEFVYADNNGIIVSPQALKMPE.

Substrate-binding positions include 75-78 and Arg-97; that span reads GDML. Asp-98 is a binding site for a divalent metal cation.

It belongs to the class II aldolase/RraA-like family. Homotrimer. A divalent metal cation serves as cofactor.

The enzyme catalyses 4-hydroxy-4-methyl-2-oxoglutarate = 2 pyruvate. The catalysed reaction is oxaloacetate + H(+) = pyruvate + CO2. Functionally, catalyzes the aldol cleavage of 4-hydroxy-4-methyl-2-oxoglutarate (HMG) into 2 molecules of pyruvate. Also contains a secondary oxaloacetate (OAA) decarboxylase activity due to the common pyruvate enolate transition state formed following C-C bond cleavage in the retro-aldol and decarboxylation reactions. This is Putative 4-hydroxy-4-methyl-2-oxoglutarate aldolase from Pseudomonas aeruginosa (strain LESB58).